The following is an 85-amino-acid chain: Large ribosomal subunit protein bL27 (85 aa).

It belongs to the bacterial ribosomal protein bL27 family.

The protein is Large ribosomal subunit protein bL27 of Xylella fastidiosa (strain 9a5c).